The chain runs to 404 residues: Cysteine desulfurase IscS (404 aa).

Residues 75–76 (AT), asparagine 155, glutamine 183, and 203–205 (SAH) contribute to the pyridoxal 5'-phosphate site. Lysine 206 carries the post-translational modification N6-(pyridoxal phosphate)lysine. Threonine 243 contributes to the pyridoxal 5'-phosphate binding site. The Cysteine persulfide intermediate role is filled by cysteine 328. Cysteine 328 contacts [2Fe-2S] cluster.

The protein belongs to the class-V pyridoxal-phosphate-dependent aminotransferase family. NifS/IscS subfamily. Homodimer. Forms a heterotetramer with IscU, interacts with other sulfur acceptors. Requires pyridoxal 5'-phosphate as cofactor.

The protein localises to the cytoplasm. The catalysed reaction is (sulfur carrier)-H + L-cysteine = (sulfur carrier)-SH + L-alanine. It participates in cofactor biosynthesis; iron-sulfur cluster biosynthesis. In terms of biological role, master enzyme that delivers sulfur to a number of partners involved in Fe-S cluster assembly, tRNA modification or cofactor biosynthesis. Catalyzes the removal of elemental sulfur atoms from cysteine to produce alanine. Functions as a sulfur delivery protein for Fe-S cluster synthesis onto IscU, an Fe-S scaffold assembly protein, as well as other S acceptor proteins. The protein is Cysteine desulfurase IscS of Pseudomonas putida (strain GB-1).